Consider the following 790-residue polypeptide: B3 domain-containing transcription repressor VAL1 (790 aa).

The disordered stretch occupies residues K234–E260. The TF-B3 DNA-binding region spans F295–A396. Disordered stretches follow at residues D400–G429 and N446–R468. A compositionally biased stretch (polar residues) spans G405 to G429. The CW-type zinc finger occupies S538–K588. 4 residues coordinate Zn(2+): C547, C550, C568, and C580. Residues L685–S732 are a coiled coil. The tract at residues R689–K737 is disordered. Positions L694–N724 are enriched in basic and acidic residues.

In terms of assembly, interacts with SNL1. Expressed in flowers and at lower levels in roots, stems and leaves.

The protein resides in the nucleus. Transcriptional repressor of gene expression involved in embryonic pathways, such as LEC1, ABI3, and FUS3. Repressor of the sugar-inducible genes involved in the seed maturation program in seedlings. Plays an essential role in regulating the transition from seed maturation to seedling growth. Functionally redundant with VAL2/HSL1. This is B3 domain-containing transcription repressor VAL1 (VAL1) from Arabidopsis thaliana (Mouse-ear cress).